Consider the following 185-residue polypeptide: Class I hydrophobin SC6 (185 aa).

Positions 1 to 17 are cleaved as a signal peptide; that stretch reads MVSRVLALISVAMLVGA. The segment at 70–104 is disordered; that stretch reads HIPEVTGSSTEEATSSSTWSGASSKPTDSAPTQCN. Low complexity predominate over residues 75 to 93; it reads TGSSTEEATSSSTWSGASS. Over residues 94–104 the composition is skewed to polar residues; sequence KPTDSAPTQCN. 4 cysteine pairs are disulfide-bonded: C103-C164, C110-C158, C111-C144, and C165-C178.

The protein belongs to the fungal hydrophobin family. In terms of assembly, self-assembles to form functional amyloid fibrils called rodlets. Self-assembly into fibrillar rodlets occurs spontaneously at hydrophobic:hydrophilic interfaces and the rodlets further associate laterally to form amphipathic monolayers.

It is found in the secreted. Its subcellular location is the cell wall. Functionally, aerial growth, conidiation, and dispersal of filamentous fungi in the environment rely upon a capability of their secreting small amphipathic proteins called hydrophobins (HPBs) with low sequence identity. Class I can self-assemble into an outermost layer of rodlet bundles on aerial cell surfaces, conferring cellular hydrophobicity that supports fungal growth, development and dispersal; whereas Class II form highly ordered films at water-air interfaces through intermolecular interactions but contribute nothing to the rodlet structure. SC6 is a dikaryon-specific class I hydrophobin that contributes to the formation of aerial hyphae and fruiting bodies. This Schizophyllum commune (Split gill fungus) protein is Class I hydrophobin SC6.